We begin with the raw amino-acid sequence, 172 residues long: 3-hydroxydecanoyl-[acyl-carrier-protein] dehydratase (172 aa).

The active site involves His70.

It belongs to the thioester dehydratase family. FabA subfamily. In terms of assembly, homodimer.

The protein localises to the cytoplasm. It carries out the reaction a (3R)-hydroxyacyl-[ACP] = a (2E)-enoyl-[ACP] + H2O. It catalyses the reaction (3R)-hydroxydecanoyl-[ACP] = (2E)-decenoyl-[ACP] + H2O. The catalysed reaction is (2E)-decenoyl-[ACP] = (3Z)-decenoyl-[ACP]. It participates in lipid metabolism; fatty acid biosynthesis. Necessary for the introduction of cis unsaturation into fatty acids. Catalyzes the dehydration of (3R)-3-hydroxydecanoyl-ACP to E-(2)-decenoyl-ACP and then its isomerization to Z-(3)-decenoyl-ACP. Can catalyze the dehydratase reaction for beta-hydroxyacyl-ACPs with saturated chain lengths up to 16:0, being most active on intermediate chain length. This chain is 3-hydroxydecanoyl-[acyl-carrier-protein] dehydratase, found in Xylella fastidiosa (strain M23).